The primary structure comprises 310 residues: Aspartate carbamoyltransferase catalytic subunit 2 (310 aa).

Residues Arg-55 and Thr-56 each coordinate carbamoyl phosphate. Lys-85 contacts L-aspartate. Residues Arg-106, His-134, and Gln-137 each coordinate carbamoyl phosphate. Residues Arg-167 and Arg-228 each contribute to the L-aspartate site. Carbamoyl phosphate-binding residues include Leu-266 and Pro-267.

The protein belongs to the aspartate/ornithine carbamoyltransferase superfamily. ATCase family. Heterododecamer (2C3:3R2) of six catalytic PyrB chains organized as two trimers (C3), and six regulatory PyrI chains organized as three dimers (R2).

It catalyses the reaction carbamoyl phosphate + L-aspartate = N-carbamoyl-L-aspartate + phosphate + H(+). It participates in pyrimidine metabolism; UMP biosynthesis via de novo pathway; (S)-dihydroorotate from bicarbonate: step 2/3. In terms of biological role, catalyzes the condensation of carbamoyl phosphate and aspartate to form carbamoyl aspartate and inorganic phosphate, the committed step in the de novo pyrimidine nucleotide biosynthesis pathway. The polypeptide is Aspartate carbamoyltransferase catalytic subunit 2 (Shewanella halifaxensis (strain HAW-EB4)).